Here is a 63-residue protein sequence, read N- to C-terminus: Transmembrane protein 033R (63 aa).

This is Transmembrane protein 033R from Dryophytes versicolor (chameleon treefrog).